We begin with the raw amino-acid sequence, 206 residues long: ATP-dependent Clp protease proteolytic subunit 2 (206 aa).

The Nucleophile role is filled by S100. H125 is an active-site residue.

It belongs to the peptidase S14 family. As to quaternary structure, fourteen ClpP subunits assemble into 2 heptameric rings which stack back to back to give a disk-like structure with a central cavity, resembling the structure of eukaryotic proteasomes.

The protein localises to the cytoplasm. It carries out the reaction Hydrolysis of proteins to small peptides in the presence of ATP and magnesium. alpha-casein is the usual test substrate. In the absence of ATP, only oligopeptides shorter than five residues are hydrolyzed (such as succinyl-Leu-Tyr-|-NHMec, and Leu-Tyr-Leu-|-Tyr-Trp, in which cleavage of the -Tyr-|-Leu- and -Tyr-|-Trp bonds also occurs).. Its function is as follows. Cleaves peptides in various proteins in a process that requires ATP hydrolysis. Has a chymotrypsin-like activity. Plays a major role in the degradation of misfolded proteins. The polypeptide is ATP-dependent Clp protease proteolytic subunit 2 (Myxococcus xanthus).